Here is a 1066-residue protein sequence, read N- to C-terminus: Ubiquitin conjugation factor E4 A (1066 aa).

Positions 35-57 (QLKQQSDELPASPDDSDNSVSES) are disordered. K386 is subject to N6-acetyllysine. Positions 987 to 1061 (DACDEFLDPI…QRWLAERKQQ (75 aa)) constitute a U-box domain.

The protein belongs to the ubiquitin conjugation factor E4 family.

The protein resides in the cytoplasm. The catalysed reaction is S-ubiquitinyl-[E2 ubiquitin-conjugating enzyme]-L-cysteine + [acceptor protein]-L-lysine = [E2 ubiquitin-conjugating enzyme]-L-cysteine + N(6)-ubiquitinyl-[acceptor protein]-L-lysine.. It functions in the pathway protein modification; protein ubiquitination. Functionally, ubiquitin-protein ligase that probably functions as an E3 ligase in conjunction with specific E1 and E2 ligases. May also function as an E4 ligase mediating the assembly of polyubiquitin chains on substrates ubiquitinated by another E3 ubiquitin ligase. Mediates 'Lys-48'-linked polyubiquitination of substrates. The polypeptide is Ubiquitin conjugation factor E4 A (Rattus norvegicus (Rat)).